Reading from the N-terminus, the 652-residue chain is MEKRMKELVDKLNQYAKEYYTEDNPSVSDAEYDKLYRELVTLEAEHPELVQADSPTHRVGGLVLDGFEKYQHEYPLYSLQDAFSREELDAFDKRVKSEFPNADYMAELKIDGLSISLTYVDGILQVGATRGDGSVGENITENVKRISDIPLKLDQPLNITVRGECYLPRAEFERINTQRQENGEAEFANPRNAAAGTLRQLDTKVVAERRLATFFYQEASPTERLTQNDVLNEVAELGFSVNPRRIVTSSMDEIWDFIQAVGQDRDHLAYDIDGVVIKVNSLAIQEELGFTVKAPRWAIAYKFPAEEKEAKLLSVDWQVGRTGVVTPTANLTPVQLAGTTVSRATLHNVDYITEKDIRIGDTVIVYKAGDIIPAVLRVVESKRTTQEAMPVPSQCPSCGSGLLHFEDEVALRCINPSCPAQIKEGLIHFASRDAMNISGMGPSVVEKLFKAELVKEVADIYGLNSQDFLQLEGFKEKSAEKLYAAIQASKENSAEKLLYGLGIRHVGAKVSKQLLESFGTIKELASADVQAIAAVDGLGEVIAKSIQRYFAKEEAQVLLKELESYGVNLSYLGQKVADDAILSGKTVVLTGKLEHLKRSEAKAKLEALGAKVTGSVSKKTDLVVAGSDAGSKLEKAQSLGIEVKDEAWLLDL.

NAD(+) is bound by residues 29-33, 78-79, and glutamate 107; these read DAEYD and SL. The active-site N6-AMP-lysine intermediate is the lysine 109. 4 residues coordinate NAD(+): arginine 130, glutamate 164, lysine 278, and lysine 302. 4 residues coordinate Zn(2+): cysteine 395, cysteine 398, cysteine 413, and cysteine 418. In terms of domain architecture, BRCT spans 577–652; the sequence is ADDAILSGKT…VKDEAWLLDL (76 aa).

The protein belongs to the NAD-dependent DNA ligase family. LigA subfamily. The cofactor is Mg(2+). Mn(2+) serves as cofactor.

The catalysed reaction is NAD(+) + (deoxyribonucleotide)n-3'-hydroxyl + 5'-phospho-(deoxyribonucleotide)m = (deoxyribonucleotide)n+m + AMP + beta-nicotinamide D-nucleotide.. In terms of biological role, DNA ligase that catalyzes the formation of phosphodiester linkages between 5'-phosphoryl and 3'-hydroxyl groups in double-stranded DNA using NAD as a coenzyme and as the energy source for the reaction. It is essential for DNA replication and repair of damaged DNA. The polypeptide is DNA ligase (Streptococcus thermophilus (strain CNRZ 1066)).